A 192-amino-acid chain; its full sequence is Na(+)-translocating ferredoxin:NAD(+) oxidoreductase complex subunit A (192 aa).

Helical transmembrane passes span 4-24 (IFIMISAIFVNNFVLSRFLGI), 38-58 (VGMGVAVTFVMALASAITYVV), 71-91 (LQTIAFILIIAALVQLVEMII), 101-121 (ALGVYLPLITTNCAVLGVALI), 133-153 (IFNGVGAALGFTLAIVLFAGI), and 169-189 (FPIALLTAGLMAIAFLGFSGM).

Belongs to the NqrDE/RnfAE family. In terms of assembly, the complex is composed of six subunits: RnfA, RnfB, RnfC, RnfD, RnfE and RnfG.

The protein localises to the cell membrane. The enzyme catalyses 2 reduced [2Fe-2S]-[ferredoxin] + Na(+)(in) + NAD(+) + H(+) = 2 oxidized [2Fe-2S]-[ferredoxin] + Na(+)(out) + NADH. Functionally, part of a membrane-bound complex that couples electron transfer with translocation of ions across the membrane. Couples electron transfer from reduced ferredoxin to NAD(+) with electrogenic movement of Na(+) out of the cell. Involved in caffeate respiration. The chain is Na(+)-translocating ferredoxin:NAD(+) oxidoreductase complex subunit A from Acetobacterium woodii (strain ATCC 29683 / DSM 1030 / JCM 2381 / KCTC 1655 / WB1).